We begin with the raw amino-acid sequence, 876 residues long: Envelope glycoprotein gp160 (876 aa).

Residues 1–33 form the signal peptide; it reads MTVTMKVMKKNNRKSWSLYIAMALLIPCLSYSK. Over 34-697 the chain is Extracellular; it reads QLYATVYSGV…ITKWLWYIKI (664 aa). Cysteines 55 and 75 form a disulfide. N-linked (GlcNAc...) asparagine; by host glycans are attached at residues Asn-60, Asn-89, Asn-138, Asn-144, Asn-152, Asn-156, Asn-181, Asn-187, Asn-197, Asn-229, Asn-234, Asn-241, Asn-262, Asn-276, Asn-293, Asn-323, Asn-337, Asn-357, and Asn-361. 5 disulfide bridges follow: Cys-120–Cys-205, Cys-127–Cys-196, Cys-132–Cys-153, Cys-218–Cys-247, and Cys-228–Cys-239. The tract at residues 132–152 is V1; that stretch reads CVDLQTNKTGLLNETINEMRN. The segment at 153 to 196 is V2; the sequence is CSFNVTTVLTDKKEQKQALFYVSDLSKVNDSNAVNGTTYMLTNC. The V3 stretch occupies residues 296–333; sequence CIREGIAEVQDIYTGPMRWRSMTLKRSNNTSPRSRVAY. Cys-296 and Cys-334 are joined by a disulfide. The CD4-binding loop stretch occupies residues 369–379; the sequence is TSGGDAEVSHL. 2 disulfides stabilise this stretch: Cys-383–Cys-452 and Cys-390–Cys-425. The tract at residues 390–425 is V4; the sequence is CNTSGMFNYTFINCTKSGCQEIKGSNETNKNGTIPC. 8 N-linked (GlcNAc...) asparagine; by host glycosylation sites follow: Asn-391, Asn-397, Asn-402, Asn-415, Asn-420, Asn-449, Asn-455, and Asn-468. V5 regions lie at residues 468–478 and 470–478; these read NSTGENTLRPV and TGENTLRPV. Residues 524-544 are fusion peptide; sequence AVGLGMLFLGVLSAAGSTMGA. The tract at residues 586 to 604 is immunosuppression; that stretch reads RQLRARLQALETLIQNQQR. Cys-610 and Cys-616 are joined by a disulfide. Residues Asn-623, Asn-638, and Asn-650 are each glycosylated (N-linked (GlcNAc...) asparagine; by host). The stretch at 646 to 680 forms a coiled coil; the sequence is QHINNVSSIIYDEIQAAQDQQEKNVKALLELDEWA. The MPER; binding to GalCer stretch occupies residues 675-696; sequence ELDEWASLWNWFDITKWLWYIK. The helical transmembrane segment at 698–718 threads the bilayer; sequence AIIIVGALIGIRVIMIILNLV. The Cytoplasmic segment spans residues 719–876; that stretch reads KNIRQGYQPL…IRQGAERILV (158 aa). The short motif at 725–728 is the YXXL motif; contains endocytosis signal element; sequence YQPL.

This sequence belongs to the HIV-1 env protein family. In terms of assembly, the mature envelope protein (Env) consists of a homotrimer of non-covalently associated gp120-gp41 heterodimers. The resulting complex protrudes from the virus surface as a spike. There seems to be as few as 10 spikes on the average virion. Interacts with host CD4, CCR5 and CXCR4. Gp120 also interacts with the C-type lectins CD209/DC-SIGN and CLEC4M/DC-SIGNR (collectively referred to as DC-SIGN(R)). Gp120 and gp41 interact with GalCer. Gp120 interacts with host ITGA4/ITGB7 complex; on CD4+ T-cells, this interaction results in rapid activation of integrin ITGAL/LFA-1, which facilitates efficient cell-to-cell spreading of HIV-1. Gp120 interacts with cell-associated heparan sulfate; this interaction increases virus infectivity on permissive cells and may be involved in infection of CD4- cells. The mature envelope protein (Env) consists of a homotrimer of non-covalently associated gp120-gp41 heterodimers. The resulting complex protrudes from the virus surface as a spike. There seems to be as few as 10 spikes on the average virion. In terms of processing, highly glycosylated by host. The high number of glycan on the protein is reffered to as 'glycan shield' because it contributes to hide protein sequence from adaptive immune system. Palmitoylation of the transmembrane protein and of Env polyprotein (prior to its proteolytic cleavage) is essential for their association with host cell membrane lipid rafts. Palmitoylation is therefore required for envelope trafficking to classical lipid rafts, but not for viral replication. Post-translationally, specific enzymatic cleavages in vivo yield mature proteins. Envelope glycoproteins are synthesized as an inactive precursor that is heavily N-glycosylated and processed likely by host cell furin in the Golgi to yield the mature SU and TM proteins. The cleavage site between SU and TM requires the minimal sequence [KR]-X-[KR]-R. About 2 of the 9 disulfide bonds of gp41 are reduced by P4HB/PDI, following binding to CD4 receptor.

It is found in the virion membrane. The protein localises to the host cell membrane. Its subcellular location is the host endosome membrane. Functionally, oligomerizes in the host endoplasmic reticulum into predominantly trimers. In a second time, gp160 transits in the host Golgi, where glycosylation is completed. The precursor is then proteolytically cleaved in the trans-Golgi and thereby activated by cellular furin or furin-like proteases to produce gp120 and gp41. Its function is as follows. Attaches the virus to the host lymphoid cell by binding to the primary receptor CD4. This interaction induces a structural rearrangement creating a high affinity binding site for a chemokine coreceptor like CXCR4 and/or CCR5. Acts as a ligand for CD209/DC-SIGN and CLEC4M/DC-SIGNR, which are respectively found on dendritic cells (DCs), and on endothelial cells of liver sinusoids and lymph node sinuses. These interactions allow capture of viral particles at mucosal surfaces by these cells and subsequent transmission to permissive cells. HIV subverts the migration properties of dendritic cells to gain access to CD4+ T-cells in lymph nodes. Virus transmission to permissive T-cells occurs either in trans (without DCs infection, through viral capture and transmission), or in cis (following DCs productive infection, through the usual CD4-gp120 interaction), thereby inducing a robust infection. In trans infection, bound virions remain infectious over days and it is proposed that they are not degraded, but protected in non-lysosomal acidic organelles within the DCs close to the cell membrane thus contributing to the viral infectious potential during DCs' migration from the periphery to the lymphoid tissues. On arrival at lymphoid tissues, intact virions recycle back to DCs' cell surface allowing virus transmission to CD4+ T-cells. Acts as a class I viral fusion protein. Under the current model, the protein has at least 3 conformational states: pre-fusion native state, pre-hairpin intermediate state, and post-fusion hairpin state. During fusion of viral and target intracellular membranes, the coiled coil regions (heptad repeats) assume a trimer-of-hairpins structure, positioning the fusion peptide in close proximity to the C-terminal region of the ectodomain. The formation of this structure appears to drive apposition and subsequent fusion of viral and target cell membranes. Complete fusion occurs in host cell endosomes and is dynamin-dependent, however some lipid transfer might occur at the plasma membrane. The virus undergoes clathrin-dependent internalization long before endosomal fusion, thus minimizing the surface exposure of conserved viral epitopes during fusion and reducing the efficacy of inhibitors targeting these epitopes. Membranes fusion leads to delivery of the nucleocapsid into the cytoplasm. The sequence is that of Envelope glycoprotein gp160 from Homo sapiens (Human).